Reading from the N-terminus, the 347-residue chain is GMP reductase (347 aa).

108-131 (ADFQKTKDIMALTDDLIFICVDIA) provides a ligand contact to NADP(+). K(+)-binding residues include glycine 181 and glycine 183. The active-site Thioimidate intermediate is the cysteine 186. 216 to 239 (IIGDGGCSCAGDVSKAFGGGADFV) contacts NADP(+).

This sequence belongs to the IMPDH/GMPR family. GuaC type 1 subfamily. Homotetramer.

It carries out the reaction IMP + NH4(+) + NADP(+) = GMP + NADPH + 2 H(+). Catalyzes the irreversible NADPH-dependent deamination of GMP to IMP. It functions in the conversion of nucleobase, nucleoside and nucleotide derivatives of G to A nucleotides, and in maintaining the intracellular balance of A and G nucleotides. This chain is GMP reductase, found in Aliivibrio salmonicida (strain LFI1238) (Vibrio salmonicida (strain LFI1238)).